Here is a 290-residue protein sequence, read N- to C-terminus: Cbb3-type cytochrome c oxidase subunit CcoP (290 aa).

Residues 1–22 are disordered; the sequence is MSVKPTKQKPGEPPTTGHSWDG. At 1–37 the chain is on the cytoplasmic side; it reads MSVKPTKQKPGEPPTTGHSWDGIEEFDNPMPRWWLWT. The chain crosses the membrane as a helical span at residues 38–58; it reads FYVTIVWAIGYSILYPAWPLI. Topologically, residues 59-290 are periplasmic; sequence NGATNGLIGH…VYVHGLGGGE (232 aa). 2 Cytochrome c domains span residues 109–199 and 206–287; these read YATN…LQIS and ALSA…HGLG. 8 residues coordinate heme c: Cys122, Cys125, His126, Met174, Cys219, Cys222, His223, and Met264.

Belongs to the CcoP / FixP family. Component of the cbb3-type cytochrome c oxidase at least composed of CcoN, CcoO, CcoQ and CcoP. The cofactor is heme c.

It localises to the cell inner membrane. It functions in the pathway energy metabolism; oxidative phosphorylation. Functionally, C-type cytochrome. Part of the cbb3-type cytochrome c oxidase complex. CcoP subunit is required for transferring electrons from donor cytochrome c via its heme groups to CcoO subunit. From there, electrons are shuttled to the catalytic binuclear center of CcoN subunit where oxygen reduction takes place. The complex also functions as a proton pump. The chain is Cbb3-type cytochrome c oxidase subunit CcoP from Cereibacter sphaeroides (strain ATCC 17023 / DSM 158 / JCM 6121 / CCUG 31486 / LMG 2827 / NBRC 12203 / NCIMB 8253 / ATH 2.4.1.) (Rhodobacter sphaeroides).